The following is a 279-amino-acid chain: HTH-type transcriptional activator RhaS (279 aa).

One can recognise an HTH araC/xylS-type domain in the interval 175-273; that stretch reads QALLGWLQNN…SQAPKSLRHQ (99 aa). DNA-binding regions (H-T-H motif) lie at residues 192–213 and 240–263; these read GGLA…KQHT and ITTI…RKAF.

As to quaternary structure, binds DNA as a dimer.

The protein resides in the cytoplasm. Its function is as follows. Activates expression of the rhaBAD and rhaT operons. This chain is HTH-type transcriptional activator RhaS, found in Pectobacterium atrosepticum (strain SCRI 1043 / ATCC BAA-672) (Erwinia carotovora subsp. atroseptica).